The primary structure comprises 377 residues: Lipoyl synthase, mitochondrial (377 aa).

C103, C108, C114, C134, C138, C141, and S349 together coordinate [4Fe-4S] cluster. Positions 119–338 constitute a Radical SAM core domain; sequence EHGTQTATIM…EERGNELGFL (220 aa).

This sequence belongs to the radical SAM superfamily. Lipoyl synthase family. The cofactor is [4Fe-4S] cluster.

Its subcellular location is the mitochondrion. The catalysed reaction is [[Fe-S] cluster scaffold protein carrying a second [4Fe-4S](2+) cluster] + N(6)-octanoyl-L-lysyl-[protein] + 2 oxidized [2Fe-2S]-[ferredoxin] + 2 S-adenosyl-L-methionine + 4 H(+) = [[Fe-S] cluster scaffold protein] + N(6)-[(R)-dihydrolipoyl]-L-lysyl-[protein] + 4 Fe(3+) + 2 hydrogen sulfide + 2 5'-deoxyadenosine + 2 L-methionine + 2 reduced [2Fe-2S]-[ferredoxin]. It functions in the pathway protein modification; protein lipoylation via endogenous pathway; protein N(6)-(lipoyl)lysine from octanoyl-[acyl-carrier-protein]: step 2/2. Its function is as follows. Catalyzes the radical-mediated insertion of two sulfur atoms into the C-6 and C-8 positions of the octanoyl moiety bound to the lipoyl domains of lipoate-dependent enzymes, thereby converting the octanoylated domains into lipoylated derivatives. This is Lipoyl synthase, mitochondrial from Drosophila sechellia (Fruit fly).